Consider the following 86-residue polypeptide: MLELIGRIDYRLGVGALIVALIIVIIVWTIAYIEYRKLVRQRRIDWLVKRIKERAEDSGNESGGDTEELETMVDMGHLRLLDGNDL.

Topologically, residues Met1–Leu12 are extracellular. The helical transmembrane segment at Gly13–Ile33 threads the bilayer. At Glu34–Leu86 the chain is on the cytoplasmic side. Ser58 and Ser62 each carry phosphoserine; by host CK2.

The protein belongs to the HIV-1 VPU protein family. Homopentamer. Interacts with host CD4 and BRTC; these interactions induce proteasomal degradation of CD4. Interacts with host BST2; this interaction leads to the degradation of host BST2. Interacts with host FBXW11. Interacts with host AP1M1; this interaction plays a role in the mistrafficking and subsequent degradation of host BST2. Interacts with host RANBP2; this interaction allows Vpu to down-regulate host BLM sumoylation. Post-translationally, phosphorylated by host CK2. This phosphorylation is necessary for interaction with human BTRC and degradation of CD4.

The protein localises to the host membrane. With respect to regulation, ion channel activity is inhibited by hexamethylene amiloride in vitro. In terms of biological role, enhances virion budding, by targeting human CD4 and Tetherin/BST2 to proteasome degradation. Degradation of CD4 prevents any unwanted premature interactions between viral Env and its host receptor CD4 in the endoplasmic reticulum. Degradation of antiretroviral protein Tetherin/BST2 is important for virion budding, as BST2 tethers new viral particles to the host cell membrane. Mechanistically, Vpu bridges either CD4 or BST2 to BTRC, a substrate recognition subunit of the Skp1/Cullin/F-box protein E3 ubiquitin ligase, induces their ubiquitination and subsequent proteasomal degradation. The alteration of the E3 ligase specificity by Vpu seems to promote the degradation of host IKBKB, leading to NF-kappa-B down-regulation and subsequent apoptosis. Acts as a viroporin that forms an oligomeric ion channel in membranes. Modulates the host DNA repair mechanisms to promote degradation of nuclear viral cDNA in cells that are already productively infected in order to suppress immune sensing and proviral hyper-integration (superinfection). Manipulates PML-NBs and modulates SUMOylation of host BLM protein thereby enhancing its DNA-end processing activity toward viral unintegrated linear DNA. Also inhibits RAD52-mediated homologous repair of viral cDNA, preventing the generation of dead-end circular forms of single copies of the long terminal repeat and permitting sustained nucleolytic attack. This is Protein Vpu from Homo sapiens (Human).